The primary structure comprises 1337 residues: DNA-directed RNA polymerase subunit beta' (1337 aa).

Zn(2+)-binding residues include Cys-60, Cys-62, Cys-75, and Cys-78. Residues Asp-536, Asp-538, and Asp-540 each coordinate Mg(2+). Cys-895, Cys-974, Cys-981, and Cys-984 together coordinate Zn(2+).

It belongs to the RNA polymerase beta' chain family. As to quaternary structure, the RNAP catalytic core consists of 2 alpha, 1 beta, 1 beta' and 1 omega subunit. When a sigma factor is associated with the core the holoenzyme is formed, which can initiate transcription. The cofactor is Mg(2+). Zn(2+) serves as cofactor.

It carries out the reaction RNA(n) + a ribonucleoside 5'-triphosphate = RNA(n+1) + diphosphate. Functionally, DNA-dependent RNA polymerase catalyzes the transcription of DNA into RNA using the four ribonucleoside triphosphates as substrates. This chain is DNA-directed RNA polymerase subunit beta', found in Bifidobacterium adolescentis (strain ATCC 15703 / DSM 20083 / NCTC 11814 / E194a).